We begin with the raw amino-acid sequence, 148 residues long: Snaclec crotocetin (148 aa).

The signal sequence occupies residues 1 to 23; it reads MGRLVFVSFGLLVVFLSLTGTGA. 3 disulfides stabilise this stretch: Cys-27–Cys-38, Cys-55–Cys-144, and Cys-121–Cys-136. Residues 34–145 enclose the C-type lectin domain; the sequence is YEGHCYKVFK…CSKTHKVVCK (112 aa).

Belongs to the snaclec family. In terms of assembly, heterodimer; disulfide-linked. In terms of tissue distribution, expressed by the venom gland.

The protein localises to the secreted. Its function is as follows. Interferes with one step of hemostasis (modulation of platelet aggregation, or coagulation cascade, for example). The polypeptide is Snaclec crotocetin (Crotalus durissus terrificus (South American rattlesnake)).